The chain runs to 232 residues: Ornithine carbamoyltransferase (232 aa).

Residues Gln-15, Arg-39, and 66-69 (HPTQ) each bind carbamoyl phosphate. L-ornithine contacts are provided by residues Asn-99, Asp-163, and 167-168 (SM). Carbamoyl phosphate-binding positions include 204–207 (HCLP) and Thr-232.

This sequence belongs to the aspartate/ornithine carbamoyltransferase superfamily. OTCase family.

It is found in the cytoplasm. It catalyses the reaction carbamoyl phosphate + L-ornithine = L-citrulline + phosphate + H(+). The protein operates within amino-acid biosynthesis; L-arginine biosynthesis; L-arginine from L-ornithine and carbamoyl phosphate: step 1/3. Its function is as follows. Reversibly catalyzes the transfer of the carbamoyl group from carbamoyl phosphate (CP) to the N(epsilon) atom of ornithine (ORN) to produce L-citrulline. The polypeptide is Ornithine carbamoyltransferase (argF) (Neisseria flava).